Reading from the N-terminus, the 220-residue chain is 7-cyano-7-deazaguanine synthase (220 aa).

Residue 7 to 17 coordinates ATP; the sequence is LSGGMDSSITA. Positions 185, 193, 196, and 199 each coordinate Zn(2+).

The protein belongs to the QueC family. Zn(2+) serves as cofactor.

The enzyme catalyses 7-carboxy-7-deazaguanine + NH4(+) + ATP = 7-cyano-7-deazaguanine + ADP + phosphate + H2O + H(+). It participates in purine metabolism; 7-cyano-7-deazaguanine biosynthesis. In terms of biological role, catalyzes the ATP-dependent conversion of 7-carboxy-7-deazaguanine (CDG) to 7-cyano-7-deazaguanine (preQ(0)). This Nitratiruptor sp. (strain SB155-2) protein is 7-cyano-7-deazaguanine synthase.